The primary structure comprises 332 residues: MKYEIDKKRLVIRVVPEREEDLYFIYLLIDKGDIIRGWTVREYKPDGVKEGERIKMYLAIKAEALEYHKFRGSLRVRGPVIEVQEGVEGVKGRRHTFDISIGREIEIEKNEDKPLEVVDEILNMAKNVMPRILLISIDDEEAAFAYITSIGVNVLHVVRNDAERSRGDSLLHDYLVTIGKIAEDLKRRLNPDKVVVTGPHIVVEQIGNYVRGDRVAQSVGGLAGIYEFMRAGLYDGLKTEMGIKAYERLMQLLATERNLVAIGLEEVEMAVAAGRVEILLIVDSYIKEDPHRAWDLIYKVYATRGKIYIIREDLEIGTSLKAMGGVASILRW.

It belongs to the eukaryotic release factor 1 family. Pelota subfamily. Monomer. Requires a divalent metal cation as cofactor.

The protein localises to the cytoplasm. Functionally, may function in recognizing stalled ribosomes, interact with stem-loop structures in stalled mRNA molecules, and effect endonucleolytic cleavage of the mRNA. May play a role in the release non-functional ribosomes and degradation of damaged mRNAs. Has endoribonuclease activity. The protein is Protein pelota homolog of Pyrobaculum aerophilum (strain ATCC 51768 / DSM 7523 / JCM 9630 / CIP 104966 / NBRC 100827 / IM2).